Consider the following 274-residue polypeptide: Bis(5'-nucleosyl)-tetraphosphatase, symmetrical (274 aa).

Belongs to the Ap4A hydrolase family.

It catalyses the reaction P(1),P(4)-bis(5'-adenosyl) tetraphosphate + H2O = 2 ADP + 2 H(+). Its function is as follows. Hydrolyzes diadenosine 5',5'''-P1,P4-tetraphosphate to yield ADP. The sequence is that of Bis(5'-nucleosyl)-tetraphosphatase, symmetrical from Shewanella sp. (strain ANA-3).